Consider the following 476-residue polypeptide: Chromosomal replication initiator protein DnaA (476 aa).

The segment at 1-87 is domain I, interacts with DnaA modulators; sequence MSESSHVGLW…LMYNVLVDKS (87 aa). Residues 87–130 are domain II; sequence SSGATVNQESTTRSTAIPQSGLPRVDERKAPGLLRAPAVQDLDP. Residues 131 to 348 form a domain III, AAA+ region region; it reads HLNPNYNFET…GIVISIMAHS (218 aa). The ATP site is built by Gly176, Gly178, Lys179, and Thr180. Residues 349-476 form a domain IV, binds dsDNA region; the sequence is TIYNKEIDLD…KKRNVSNGER (128 aa).

The protein belongs to the DnaA family. In terms of assembly, oligomerizes as a right-handed, spiral filament on DNA at oriC.

It is found in the cytoplasm. Plays an essential role in the initiation and regulation of chromosomal replication. ATP-DnaA binds to the origin of replication (oriC) to initiate formation of the DNA replication initiation complex once per cell cycle. Binds the DnaA box (a 9 base pair repeat at the origin) and separates the double-stranded (ds)DNA. Forms a right-handed helical filament on oriC DNA; dsDNA binds to the exterior of the filament while single-stranded (ss)DNA is stabiized in the filament's interior. The ATP-DnaA-oriC complex binds and stabilizes one strand of the AT-rich DNA unwinding element (DUE), permitting loading of DNA polymerase. After initiation quickly degrades to an ADP-DnaA complex that is not apt for DNA replication. Binds acidic phospholipids. In Bacteroides fragilis (strain YCH46), this protein is Chromosomal replication initiator protein DnaA.